Consider the following 874-residue polypeptide: Valine--tRNA ligase (874 aa).

Residues 1-10 (MTENSQQQPP) show a composition bias toward polar residues. The interval 1–23 (MTENSQQQPPASEPELPTQYAPA) is disordered. A 'HIGH' region motif is present at residues 57-67 (PNVTGSLHLGH). Residues 531-535 (KMSKS) carry the 'KMSKS' region motif. K534 is a binding site for ATP. A coiled-coil region spans residues 806–871 (IDIVAERKRL…ARIQAQLDRM (66 aa)).

The protein belongs to the class-I aminoacyl-tRNA synthetase family. ValS type 1 subfamily. As to quaternary structure, monomer.

It localises to the cytoplasm. It carries out the reaction tRNA(Val) + L-valine + ATP = L-valyl-tRNA(Val) + AMP + diphosphate. Its function is as follows. Catalyzes the attachment of valine to tRNA(Val). As ValRS can inadvertently accommodate and process structurally similar amino acids such as threonine, to avoid such errors, it has a 'posttransfer' editing activity that hydrolyzes mischarged Thr-tRNA(Val) in a tRNA-dependent manner. The chain is Valine--tRNA ligase from Streptomyces avermitilis (strain ATCC 31267 / DSM 46492 / JCM 5070 / NBRC 14893 / NCIMB 12804 / NRRL 8165 / MA-4680).